The sequence spans 166 residues: Dihydrofolate reductase (166 aa).

In terms of domain architecture, DHFR spans 6–164 (KISLIVAMDK…YDYYFHIYER (159 aa)). Position 10–12 (10–12 (IVA)) interacts with substrate. Residues 11-12 (VA) and 19-24 (IGKDND) each bind NADP(+). Residue D32 participates in substrate binding. 48 to 51 (GRKN) contacts NADP(+). R62 provides a ligand contact to substrate. NADP(+) contacts are provided by residues 67-70 (LTRD) and 100-105 (FGGEQI). T119 lines the substrate pocket.

It belongs to the dihydrofolate reductase family.

It catalyses the reaction (6S)-5,6,7,8-tetrahydrofolate + NADP(+) = 7,8-dihydrofolate + NADPH + H(+). The protein operates within cofactor biosynthesis; tetrahydrofolate biosynthesis; 5,6,7,8-tetrahydrofolate from 7,8-dihydrofolate: step 1/1. Key enzyme in folate metabolism. Catalyzes an essential reaction for de novo glycine and purine synthesis, and for DNA precursor synthesis. The polypeptide is Dihydrofolate reductase (dfrD) (Staphylococcus haemolyticus).